A 470-amino-acid chain; its full sequence is Xaa-Pro aminopeptidase 2 (470 aa).

Mn(2+) is bound by residues D287, D299, H382, E413, and E437.

This sequence belongs to the peptidase M24B family. As to quaternary structure, homodimer. Requires Mn(2+) as cofactor.

It catalyses the reaction Release of any N-terminal amino acid, including proline, that is linked to proline, even from a dipeptide or tripeptide.. The polypeptide is Xaa-Pro aminopeptidase 2 (pepP2) (Streptomyces coelicolor (strain ATCC BAA-471 / A3(2) / M145)).